Reading from the N-terminus, the 121-residue chain is Methylglyoxal synthase (121 aa).

The region spanning 1 to 121 (MMKVALIAHD…SAELFLRALN (121 aa)) is the MGS-like domain. Residues His9, Lys13, 35–38 (TGTT), and 55–56 (SG) contribute to the substrate site. Asp61 serves as the catalytic Proton donor/acceptor. His88 contributes to the substrate binding site.

The protein belongs to the methylglyoxal synthase family.

The enzyme catalyses dihydroxyacetone phosphate = methylglyoxal + phosphate. Its function is as follows. Catalyzes the formation of methylglyoxal from dihydroxyacetone phosphate. The sequence is that of Methylglyoxal synthase from Carboxydothermus hydrogenoformans (strain ATCC BAA-161 / DSM 6008 / Z-2901).